We begin with the raw amino-acid sequence, 501 residues long: O-phosphoseryl-tRNA(Sec) selenium transferase (501 aa).

A tetramerization region spans residues 1 to 44 (MNRESFAAGERLVSPAYVRQGCEARRSHEHLIRLLLEKGKCPEN). Ser-14 bears the Phosphoserine mark. Residue Arg-75 participates in pyridoxal 5'-phosphate binding. The phosphate loop (P-loop) stretch occupies residues 96–106 (GRSGDISAVQP). Residues Arg-97, Ser-98, and Gln-105 each contribute to the substrate site. Arg-271 is a tRNA binding site. At Lys-284 the chain carries N6-(pyridoxal phosphate)lysine. Residue Arg-313 coordinates substrate. 2 residues coordinate tRNA: Arg-398 and Lys-463. The tract at residues 474 to 493 (DKTEDVDIEEMALKLDNVLL) is SLA/LP epitope.

This sequence belongs to the SepSecS family. As to quaternary structure, homotetramer formed by a catalytic dimer and a non-catalytic dimer serving as a binding platform that orients tRNASec for catalysis. Each tetramer binds the CCA ends of two tRNAs which point to the active sites of the catalytic dimer. The cofactor is pyridoxal 5'-phosphate. As to expression, primarily expressed in liver, pancreas, kidney and lung. Overexpressed in PHA-stimulated T-cells.

It is found in the cytoplasm. It catalyses the reaction O-phospho-L-seryl-tRNA(Sec) + selenophosphate + H2O = L-selenocysteinyl-tRNA(Sec) + 2 phosphate. The protein operates within aminoacyl-tRNA biosynthesis; selenocysteinyl-tRNA(Sec) biosynthesis; selenocysteinyl-tRNA(Sec) from L-seryl-tRNA(Sec) (archaeal/eukaryal route): step 2/2. Its function is as follows. Converts O-phosphoseryl-tRNA(Sec) to selenocysteinyl-tRNA(Sec) required for selenoprotein biosynthesis. The protein is O-phosphoseryl-tRNA(Sec) selenium transferase (SEPSECS) of Homo sapiens (Human).